Reading from the N-terminus, the 658-residue chain is ATP-dependent zinc metalloprotease FtsH 4 (658 aa).

The interval 1–22 is disordered; it reads MREPTNRQGSPGPGEPRPPAQG. Residues 1-28 lie on the Cytoplasmic side of the membrane; the sequence is MREPTNRQGSPGPGEPRPPAQGRPRFPT. A helical transmembrane segment spans residues 29 to 49; sequence WILWVALLALALWNVYTFFWP. At 50–149 the chain is on the extracellular side; the sequence is SSGARLNIPY…TVKIDQAGGS (100 aa). The tract at residues 95 to 114 is disordered; that stretch reads QVLSPGDPVPPGTSPNEIRT. The helical transmembrane segment at 150 to 170 threads the bilayer; the sequence is VWPSLLATIVPLFLFIGLMVY. Over 171-658 the chain is Cytoplasmic; the sequence is LGRSMSRGQQ…AAPAAAADSV (488 aa). An ATP-binding site is contributed by 243-250; the sequence is GPPGTGKT. Zn(2+) is bound at residue histidine 464. Glutamate 465 is an active-site residue. Residues histidine 468 and aspartate 540 each coordinate Zn(2+).

It in the central section; belongs to the AAA ATPase family. This sequence in the C-terminal section; belongs to the peptidase M41 family. In terms of assembly, homohexamer. It depends on Zn(2+) as a cofactor.

It is found in the cell membrane. Functionally, acts as a processive, ATP-dependent zinc metallopeptidase for both cytoplasmic and membrane proteins. Plays a role in the quality control of integral membrane proteins. The polypeptide is ATP-dependent zinc metalloprotease FtsH 4 (ftsh4) (Sphaerobacter thermophilus (strain ATCC 49802 / DSM 20745 / KCCM 41009 / NCIMB 13125 / S 6022)).